The sequence spans 257 residues: Spindlin-2C (257 aa).

Residues 1-47 (MKTPHKKGAAKEQMGEGVGHHIGSTTIKKKKASQKRQRSRSSSRRSI) are disordered. The segment covering 27-43 (IKKKKASQKRQRSRSSS) has biased composition (basic residues). Tudor-like domain stretches follow at residues 48-97 (VGCR…LELH), 127-176 (IGKA…YQLL), and 208-253 (IGKH…YDLV). Histone H3K4me3 and H3R8me2a binding regions lie at residues Glu136 and 244–246 (DFH).

The protein belongs to the SPIN/STSY family. Interacts with C11orf84/SPINDOC.

It localises to the nucleus. Functionally, may be involved in the regulation of cell cycle progression. Exhibits H3K4me3-binding activity. In Mus musculus (Mouse), this protein is Spindlin-2C (Spin2c).